The following is a 285-amino-acid chain: uncharacterized protein (285 aa).

Residues His-110, Asp-131, His-133, Asp-135, Asp-214, and Asp-216 each coordinate Mn(2+).

This sequence belongs to the arginase family. Mn(2+) is required as a cofactor.

This is an uncharacterized protein from Methanothermus fervidus.